Consider the following 408-residue polypeptide: Histidine--tRNA ligase (408 aa).

It belongs to the class-II aminoacyl-tRNA synthetase family. Homodimer.

The protein resides in the cytoplasm. It catalyses the reaction tRNA(His) + L-histidine + ATP = L-histidyl-tRNA(His) + AMP + diphosphate + H(+). In Campylobacter lari (strain RM2100 / D67 / ATCC BAA-1060), this protein is Histidine--tRNA ligase.